We begin with the raw amino-acid sequence, 349 residues long: ATPase GET3 (349 aa).

26 to 33 (KGGVGKTT) serves as a coordination point for ATP. D57 is a catalytic residue. Residues E243 and N270 each contribute to the ATP site. Zn(2+)-binding residues include C280 and C283.

Belongs to the arsA ATPase family. Homodimer. Component of the Golgi to ER traffic (GET) complex, which is composed of GET1, GET2 and GET3. Within the complex, GET1 and GET2 form a heterotetramer which is stabilized by phosphatidylinositol binding and which binds to the GET3 homodimer. Interacts with the chloride channel protein GEF1.

Its subcellular location is the cytoplasm. The protein localises to the endoplasmic reticulum. The protein resides in the golgi apparatus. ATPase required for the post-translational delivery of tail-anchored (TA) proteins to the endoplasmic reticulum. Recognizes and selectively binds the transmembrane domain of TA proteins in the cytosol. This complex then targets to the endoplasmic reticulum by membrane-bound receptors GET1 and GET2, where the tail-anchored protein is released for insertion. This process is regulated by ATP binding and hydrolysis. ATP binding drives the homodimer towards the closed dimer state, facilitating recognition of newly synthesized TA membrane proteins. ATP hydrolysis is required for insertion. Subsequently, the homodimer reverts towards the open dimer state, lowering its affinity for the GET1-GET2 receptor, and returning it to the cytosol to initiate a new round of targeting. Cooperates with the HDEL receptor ERD2 to mediate the ATP-dependent retrieval of resident ER proteins that contain a C-terminal H-D-E-L retention signal from the Golgi to the ER. Involved in low-level resistance to the oxyanions arsenite and arsenate, and in heat tolerance. This Clavispora lusitaniae (strain ATCC 42720) (Yeast) protein is ATPase GET3.